A 401-amino-acid polypeptide reads, in one-letter code: Serine--glyoxylate aminotransferase (401 aa).

Met1 bears the N-acetylmethionine mark. Pyridoxal 5'-phosphate contacts are provided by residues 68–70, Thr148, and 200–201; these read TGT and QK. Lys201 is a 3-hydroxypyruvate binding site. Lys201 carries the post-translational modification N6-(pyridoxal phosphate)lysine. Phosphoserine is present on Ser204. Position 347 (Arg347) interacts with 3-hydroxypyruvate. Positions 399 to 401 match the Microbody targeting signal motif; it reads SRI.

This sequence belongs to the class-V pyridoxal-phosphate-dependent aminotransferase family. In terms of assembly, forms homodimers. Interacts with RABGAP22. Requires pyridoxal 5'-phosphate as cofactor. In terms of tissue distribution, widely expressed. Preferentially expressed in green, leafy tissues, root cortex and epidermis, developing siliques and dry seeds.

The protein localises to the peroxisome. It carries out the reaction glyoxylate + L-serine = 3-hydroxypyruvate + glycine. The catalysed reaction is glyoxylate + L-alanine = glycine + pyruvate. The enzyme catalyses L-serine + pyruvate = 3-hydroxypyruvate + L-alanine. It catalyses the reaction 3-hydroxypyruvate + L-asparagine = 2-oxosuccinamate + L-serine. It carries out the reaction L-asparagine + glyoxylate = 2-oxosuccinamate + glycine. The catalysed reaction is L-asparagine + pyruvate = 2-oxosuccinamate + L-alanine. Inhibited by aminooxyacetate and beta-chloro-L-alanine, but not by p-hydroxymercuribenzoate. In terms of biological role, photorespiratory enzyme that catalyzes transamination reactions with multiple substrates, including asparagine. Functions exclusively as a catabolic enzyme in Asn metabolism. Involved in root development during seedling establishment after seed germination by regulating serine homeostasis and acetate conversion. This is Serine--glyoxylate aminotransferase from Arabidopsis thaliana (Mouse-ear cress).